A 525-amino-acid chain; its full sequence is CBL-interacting protein kinase 21 (525 aa).

Residues 87–342 enclose the Protein kinase domain; the sequence is YEMGRALGEG…ITGIRAHEWF (256 aa). ATP-binding positions include 93–101 and Lys116; that span reads LGEGHFGKV. The active-site Proton acceptor is the Asp210. The activation loop stretch occupies residues 228 to 257; sequence DFGLSALPQNQRKDGLLHTTCGSPNYIAPE. Positions 372 to 401 constitute an NAF domain; sequence DIETSPAISQINAFQLIGMSSCLDLSGFFE. The interval 407 to 436 is PPI; the sequence is ERKIRFVSNYSPTSLFEKIESTVTEKGFQV.

Belongs to the protein kinase superfamily. CAMK Ser/Thr protein kinase family. SNF1 subfamily. Mn(2+) serves as cofactor.

It catalyses the reaction L-seryl-[protein] + ATP = O-phospho-L-seryl-[protein] + ADP + H(+). The catalysed reaction is L-threonyl-[protein] + ATP = O-phospho-L-threonyl-[protein] + ADP + H(+). Functionally, CIPK serine-threonine protein kinases interact with CBL proteins. Binding of a CBL protein to the regulatory NAF domain of CIPK protein lead to the activation of the kinase in a calcium-dependent manner. This chain is CBL-interacting protein kinase 21 (CIPK21), found in Oryza sativa subsp. japonica (Rice).